Here is a 467-residue protein sequence, read N- to C-terminus: UDP-glycosyltransferase 71D1 (467 aa).

The active-site Proton acceptor is the His-16. His-16 lines the an anthocyanidin pocket. Asp-122 functions as the Charge relay in the catalytic mechanism. Positions 144, 341, 356, 359, 360, 361, and 364 each coordinate UDP-alpha-D-glucose. Ala-379 provides a ligand contact to an anthocyanidin. UDP-alpha-D-glucose contacts are provided by Glu-380 and Gln-381.

It belongs to the UDP-glycosyltransferase family.

It catalyses the reaction a flavonol + UDP-alpha-D-glucose = a flavonol 3-O-beta-D-glucoside + UDP + H(+). Functionally, possesses quercetin 3-O-glucosyltransferase activity in vitro. This Arabidopsis thaliana (Mouse-ear cress) protein is UDP-glycosyltransferase 71D1 (UGT71D1).